The primary structure comprises 118 residues: Acetylcholine receptor subunit beta (118 aa).

The first 15 residues, 1–15, serve as a signal peptide directing secretion; it reads APTVALLLLCALCSA.

Belongs to the ligand-gated ion channel (TC 1.A.9) family. Acetylcholine receptor (TC 1.A.9.1) subfamily. Beta-1/CHRNB1 sub-subfamily. As to quaternary structure, pentamer of two alpha chains, and one each of the beta, delta, and gamma chains.

The protein localises to the postsynaptic cell membrane. It is found in the cell membrane. The catalysed reaction is K(+)(in) = K(+)(out). It carries out the reaction Na(+)(in) = Na(+)(out). In terms of biological role, after binding acetylcholine, the AChR responds by an extensive change in conformation that affects all subunits and leads to opening of an ion-conducting channel across the plasma membrane. The protein is Acetylcholine receptor subunit beta (CHRNB1) of Gallus gallus (Chicken).